Reading from the N-terminus, the 277-residue chain is Phosphonates import ATP-binding protein PhnC 2 (277 aa).

Positions 3–251 (ISLNGISVQH…LLQALYAQHL (249 aa)) constitute an ABC transporter domain. 40-47 (GPSGAGKT) contributes to the ATP binding site.

This sequence belongs to the ABC transporter superfamily. Phosphonates importer (TC 3.A.1.9.1) family. In terms of assembly, the complex is composed of two ATP-binding proteins (PhnC), two transmembrane proteins (PhnE) and a solute-binding protein (PhnD).

The protein resides in the cell inner membrane. It carries out the reaction phosphonate(out) + ATP + H2O = phosphonate(in) + ADP + phosphate + H(+). Its function is as follows. Part of the ABC transporter complex PhnCDE involved in phosphonates import. Responsible for energy coupling to the transport system. In Albidiferax ferrireducens (strain ATCC BAA-621 / DSM 15236 / T118) (Rhodoferax ferrireducens), this protein is Phosphonates import ATP-binding protein PhnC 2.